A 299-amino-acid chain; its full sequence is Small ribosomal subunit protein uS3 (299 aa).

In terms of domain architecture, KH type-2 spans 39–107 (VREYLKAKLK…PVAVNIEEVR (69 aa)). The tract at residues 214 to 299 (PVIKTDERED…AVAPGDAKGE (86 aa)) is disordered. Residues 217-248 (KTDEREDDRRNRRGPRSDRPAGDRRPPSRDGA) show a composition bias toward basic and acidic residues. Residues 257-282 (ADAGAAAPTDKPADGAAPAAADGPKA) are compositionally biased toward low complexity.

This sequence belongs to the universal ribosomal protein uS3 family. In terms of assembly, part of the 30S ribosomal subunit. Forms a tight complex with proteins S10 and S14.

Its function is as follows. Binds the lower part of the 30S subunit head. Binds mRNA in the 70S ribosome, positioning it for translation. This Methylibium petroleiphilum (strain ATCC BAA-1232 / LMG 22953 / PM1) protein is Small ribosomal subunit protein uS3.